A 109-amino-acid polypeptide reads, in one-letter code: ATPase inhibitor mai-2, mitochondrial (109 aa).

2 disordered regions span residues 17–39 and 73–95; these read RFSTGGHGDGAGRGGGSGGSIRD and QEVDHHKSQLENHQKVLDRHQKR. Positions 21–35 are enriched in gly residues; it reads GGHGDGAGRGGGSGG. The stretch at 45–109 forms a coiled coil; that stretch reads GKMEAAREDE…EAEERALGKE (65 aa).

This sequence belongs to the ATPase inhibitor family.

It localises to the mitochondrion. In terms of biological role, thought to be a regulatory component of the ATP-synthesizing complex in the mitochondria. The protein is ATPase inhibitor mai-2, mitochondrial of Caenorhabditis briggsae.